The following is a 187-amino-acid chain: Elongation factor P (187 aa).

The protein belongs to the elongation factor P family.

Its subcellular location is the cytoplasm. Its pathway is protein biosynthesis; polypeptide chain elongation. In terms of biological role, involved in peptide bond synthesis. Stimulates efficient translation and peptide-bond synthesis on native or reconstituted 70S ribosomes in vitro. Probably functions indirectly by altering the affinity of the ribosome for aminoacyl-tRNA, thus increasing their reactivity as acceptors for peptidyl transferase. This chain is Elongation factor P, found in Ruegeria pomeroyi (strain ATCC 700808 / DSM 15171 / DSS-3) (Silicibacter pomeroyi).